We begin with the raw amino-acid sequence, 64 residues long: Prokaryotic ubiquitin-like protein Pup (64 aa).

The segment at Met-1–Gly-35 is disordered. The span at Glu-21–Val-33 shows a compositional bias: polar residues. The segment at Glu-21 to Tyr-58 is ARC ATPase binding. Gln-64 carries the post-translational modification Deamidated glutamine. Gln-64 participates in a covalent cross-link: Isoglutamyl lysine isopeptide (Gln-Lys) (interchain with K-? in acceptor proteins).

The protein belongs to the prokaryotic ubiquitin-like protein family. Strongly interacts with the proteasome-associated ATPase ARC through a hydrophobic interface; the interacting region of Pup lies in its C-terminal half. There is one Pup binding site per ARC hexamer ring. Is modified by deamidation of its C-terminal glutamine to glutamate by the deamidase Dop, a prerequisite to the subsequent pupylation process.

The protein operates within protein degradation; proteasomal Pup-dependent pathway. Protein modifier that is covalently attached to lysine residues of substrate proteins, thereby targeting them for proteasomal degradation. The tagging system is termed pupylation. The sequence is that of Prokaryotic ubiquitin-like protein Pup from Corynebacterium jeikeium (strain K411).